The sequence spans 65 residues: UPF0434 protein CPS_2127 (65 aa).

Belongs to the UPF0434 family.

The chain is UPF0434 protein CPS_2127 from Colwellia psychrerythraea (strain 34H / ATCC BAA-681) (Vibrio psychroerythus).